The following is an 806-amino-acid chain: Glycerol-3-phosphate acyltransferase (806 aa).

Residues 305–310 (CHRSHM) carry the HXXXXD motif motif.

The protein belongs to the GPAT/DAPAT family.

The protein localises to the cell inner membrane. It carries out the reaction sn-glycerol 3-phosphate + an acyl-CoA = a 1-acyl-sn-glycero-3-phosphate + CoA. Its pathway is phospholipid metabolism; CDP-diacylglycerol biosynthesis; CDP-diacylglycerol from sn-glycerol 3-phosphate: step 1/3. This chain is Glycerol-3-phosphate acyltransferase, found in Salmonella agona (strain SL483).